Consider the following 751-residue polypeptide: Cytosolic neutral trehalase (751 aa).

The segment covering 1–10 (MSQVNTSQGP) has biased composition (polar residues). The interval 1 to 59 (MSQVNTSQGPVAQGRQRRLSSLSEFNDPFSNAEVYYGPPTDPRKQKQAKPAKINRTRTM) is disordered. N-acetylserine is present on Ser-2. A phosphoserine; by PKA mark is found at Ser-20 and Ser-21. A Phosphoserine modification is found at Ser-23. Positions 45–55 (QKQAKPAKINR) are enriched in basic residues. Thr-58 carries the phosphothreonine modification. Ser-60 carries the post-translational modification Phosphoserine; by PKA. Residue Ser-66 is modified to Phosphoserine. Residues 73–92 (FGKLQQTRRGSEDDTYSSSQ) form a disordered region. Ser-83 is modified (phosphoserine; by PKA). Residues Asp-114, Asp-116, Asn-118, Gln-120, and Asp-125 each coordinate Ca(2+). Substrate-binding positions include Arg-302, 309–310 (WD), Asn-346, 355–357 (RSQ), Glu-424, Arg-473, and Gly-476. Residues Asp-478 and Glu-674 each act as proton donor/acceptor in the active site.

Belongs to the glycosyl hydrolase 37 family. Monomer. Interacts with BMH1 dimers; the interaction is direct and activates NTH1. Interacts with BMH2. Ca(2+) is required as a cofactor. In terms of processing, phosphorylated by protein kinase A (PKA); phosphorylation at Ser-60 and Ser-83 is required for activation by the 14-3-3 proteins BMH1 and BMH2.

The protein localises to the cytoplasm. The enzyme catalyses alpha,alpha-trehalose + H2O = alpha-D-glucose + beta-D-glucose. The protein operates within carbohydrate degradation. With respect to regulation, activated by calcium. Activated by protein kinase A (PKA)-mediated phosphorylation. Functionally, hydrolyzes intracellular trehalose to glucose. The disaccharide trehalose serves as a storage carbohydrate that is mobilized during nutrient stress. Regulates the level of trehalose as a protectant for cell integrity during heat stress. This chain is Cytosolic neutral trehalase, found in Saccharomyces cerevisiae (strain ATCC 204508 / S288c) (Baker's yeast).